The chain runs to 86 residues: Small ribosomal subunit protein uS17 (86 aa).

The protein belongs to the universal ribosomal protein uS17 family. In terms of assembly, part of the 30S ribosomal subunit.

Its function is as follows. One of the primary rRNA binding proteins, it binds specifically to the 5'-end of 16S ribosomal RNA. This is Small ribosomal subunit protein uS17 from Shouchella clausii (strain KSM-K16) (Alkalihalobacillus clausii).